The sequence spans 1576 residues: MENILCFLNSYTETGLSPDSHWLDIDPNFICLSGLGLFILYLFYVVLTLYSSPTEKNNDIQKHQGRAKRRRKGGTFKGFPDWKSFQREEEEERKLLSLLKSFGPPVSCSPRGQHHDTNHFRRLLCPDPVCRVCKRATADIQQLLSWESLKDAAPSVSPLASSASATESSFTLASTPSATPPEDLILSPRPKASPPPPLILSPDLITTLADLFSPSPLRDPLPPQPVSPLDSKFPIDHSPPQQLPFPLLPPHHIERVESSLQPEASLSLNTIFSFGSTLCQDISQAMNPIDSCARHHGPPIPSALPPEDCTVTQSKSSLTILKTFPEMLSLGGSGGSSTSAPTIKGIDHSHLASSEFTWWQPHAKDSFSSNFVPSDFMEELLTLHSSEAFLGGHSVANLIEPVNISFLSHDILALLERQVKKRGDFLMWKENGKKPGSFPKQLRPNYQLNSSRNMLTSIAVKHDLAESFPFWASKGKLEWQHIHQQPPHSKCFEDHLEQKYVQLFWGLPSLHSESLHPTVLVQRGHSSMFVFFNGITNTSISHESPVLPPPQPLSLPSTQPLPLPQTLPQGQSPHLTQVKSLAQPQSPFRALLPSPLFLIRICGVCFHRPQNEARSLLPSEINHLEWNVLQKVQESLWGLPSVVQKSQEDFCPPAPNPELVRKSFKVHVPISIIPGDFPLSSEVRKKLEQHIRRRLIQRRWGLPRRIHESLSLLRPQSKISELSVSERIHGPLNISLVEGQRCNVLKKSASSFPRSFHERSSNMLSMENVGNYQGYSQETVPKDHLLHGPETSSDKDLRSNSERDLETHMMHLSGNDSGVRLGQKQLENALTVRLSKKFEEINEGRMPGTVHSSWHSVKQTMSLPEKSHSQIKHRNLVTLVSEDHCVDTSQEISFLSSNKQKMLEAHIKTFRMRMLWGLPLKVLESIEIFKSKADLSTSFSHFDLPSSATFISQGDSKDGVSKSRSRSTFQGEKLGTTSSVPILDRPHPVSSPVVQEGQGTLRRQFSDTDHDLIETDSKDGASTSLRRGTTDFQSEKLDSTSSFPILGHSYLVTSPVNQEKQGTLRREFSDTDNDLTESVRTTEDGRQTFLPPPHSIVDEVSQKQTVLASRCSAELPIMQAGAGCESWDKRKSSFHNVDRLQGSRKTFPVTNALQSQTRNNLTTSKSGSCSLTNVKASTSNETEIFPPRISVPQDPKSSYLKNQMLSQLKLVQRKHSQPQSHFTDMSFALDNLSSKDLLTNSQGISSGDMGTSQVVHVHLEDSGIRVAQKQEPRVPTCVLQKCQVTNFPPAVNRVSPVRPKGGELDGGDAGLGTSQRRRKSLPVHNKTSGEVLGSKSSPTLKTQPPPENLFRKWMKTSLQWFNKPSISYEEQESSWEKGSSLSSCVQNIGRVIRAAFTGTTEAQKIRKDTREFLEEKLGHRHGIDITCPQEPLSFPVGLGKAQHNPEVHVRAEPVQGCPCNYRAPSCKVTRTKSCSQQAIFVGQNYPTRIRQIIDKDRQPQKVEAFKGKILCQSHPQSMPHRKPVPHPNPTCRRQVSLVCPAVPTSAKSPVFSDVPFLTGQKMLPKHLQGGKFPPTK.

A helical membrane pass occupies residues 29-49; the sequence is FICLSGLGLFILYLFYVVLTL. 5 disordered regions span residues 170–197, 542–572, 782–801, 952–1033, and 1293–1347; these read FTLASTPSATPPEDLILSPRPKASPPPP, HESPVLPPPQPLSLPSTQPLPLPQTLPQGQS, KDHLLHGPETSSDKDLRSNS, SQGD…TDFQ, and RVSP…PPPE. Pro residues predominate over residues 546-565; sequence VLPPPQPLSLPSTQPLPLPQ. The span at 966–980 shows a compositional bias: polar residues; sequence RSTFQGEKLGTTSSV. A compositionally biased stretch (basic and acidic residues) spans 1004–1019; sequence QFSDTDHDLIETDSKD. A compositionally biased stretch (polar residues) spans 1020–1032; the sequence is GASTSLRRGTTDF.

Belongs to the SPATA31 family.

Its subcellular location is the membrane. Functionally, may play a role in spermatogenesis. This is Spermatogenesis-associated protein 31D1 (SPATA31D1) from Homo sapiens (Human).